The following is a 246-amino-acid chain: Pyridoxine 5'-phosphate synthase (246 aa).

3-amino-2-oxopropyl phosphate-binding residues include Asn-8 and Arg-19. His-44 acts as the Proton acceptor in catalysis. Positions 46 and 51 each coordinate 1-deoxy-D-xylulose 5-phosphate. The Proton acceptor role is filled by Glu-76. Position 106 (Thr-106) interacts with 1-deoxy-D-xylulose 5-phosphate. His-198 functions as the Proton donor in the catalytic mechanism. Residues Asp-199 and 221 to 222 (GH) contribute to the 3-amino-2-oxopropyl phosphate site.

The protein belongs to the PNP synthase family. In terms of assembly, homooctamer; tetramer of dimers.

The protein resides in the cytoplasm. It catalyses the reaction 3-amino-2-oxopropyl phosphate + 1-deoxy-D-xylulose 5-phosphate = pyridoxine 5'-phosphate + phosphate + 2 H2O + H(+). Its pathway is cofactor biosynthesis; pyridoxine 5'-phosphate biosynthesis; pyridoxine 5'-phosphate from D-erythrose 4-phosphate: step 5/5. Catalyzes the complicated ring closure reaction between the two acyclic compounds 1-deoxy-D-xylulose-5-phosphate (DXP) and 3-amino-2-oxopropyl phosphate (1-amino-acetone-3-phosphate or AAP) to form pyridoxine 5'-phosphate (PNP) and inorganic phosphate. The chain is Pyridoxine 5'-phosphate synthase from Brucella suis (strain ATCC 23445 / NCTC 10510).